A 659-amino-acid chain; its full sequence is Zinc finger protein 304 (659 aa).

Residues 14 to 88 (VTFEDVFVYF…TAESGLFQKA (75 aa)) form the KRAB domain. 16 consecutive C2H2-type zinc fingers follow at residues 89-111 (HPCE…QGSH), 115-139 (KLCT…QKQH), 251-273 (FRCL…RKIH), 279-301 (HVCK…QKFH), 307-329 (YTCS…QRVH), 335-357 (YDCS…QRIH), 363-385 (YKCN…QRFH), 391-413 (YECS…WRIH), 419-441 (YECI…RRVH), 447-469 (YVCS…QIIH), 475-497 (YECS…QKIH), 503-525 (YECG…QRIH), 531-553 (YECN…QRVH), 559-581 (YVCS…KKVH), 587-609 (YECS…QRVH), and 615-637 (YVCS…QKAH).

Belongs to the krueppel C2H2-type zinc-finger protein family. Probably part of a corepressor complex containing ZNF304, TRIM28, SETDB1 and DNMT1; leading to promoter hypermethylation and transcriptional silencing. Probably associates with Polycomb group (PcG) complexes; leading to trimethylation of 'Lys-27' of histone H3 (H3K27me3). Interacts with USP28. In terms of processing, deubiquitinated by USP28; the deubiquitination leads to the stabilization of ZNF304 from proteolytic degradation. As to expression, expressed in undifferentiated embryonic stem cells (ESCs). Expressed strongly in colorectal cancers cells (CRCs). Expressed strongly in ovarian carcinoma (OC) tumor cell lines compared to non-transformed ovarian epithelial cells (at protein level). Expressed in lymphoid tissues, thyroid, adrenal gland, prostate, pancreas and skeletal muscles.

Its subcellular location is the nucleus. Its function is as follows. Acts as a transcriptional regulator and plays a role in gene silencing. Probably forms a corepressor complex required for activated KRAS-mediated promoter hypermethylation and transcriptional silencing of several tumor suppressor genes (TSGs) or other tumor-related genes in colorectal cancer (CRC) cells. Also required to maintain a transcriptionally repressive state of genes in undifferentiated embryonic stem cells (ESCs) by inducing trimethylation of 'Lys-27' of histone H3 (H3K27me3) in a Polycomb group (PcG) complexes-dependent manner. Associates at promoter regions of TSGs and mediates the recruitment of the corepressor complex containing the scaffolding protein TRIM28, methyltransferase DNMT1 and histone methyltransferase SETDB1 and/or the PcG complexes at those sites. Transcription factor involved in the metastatic cascade process by inducing cell migration and proliferation and gain resistance to anoikis of ovarian carcinoma (OC) cells via integrin-mediated signaling pathways. Associates with the ITGB1 promoter and positively regulates beta-1 integrin transcription expression. Promotes angiogenesis. Promotes tumor growth. The protein is Zinc finger protein 304 of Homo sapiens (Human).